The primary structure comprises 212 residues: ER lumen protein-retaining receptor 1-A (212 aa).

The Lumenal portion of the chain corresponds to 1–4 (MNIF). A helical transmembrane segment spans residues 5–24 (RFLGDISHLSAIFILLLKIW). At 25 to 32 (KSRSCAGI) the chain is on the cytoplasmic side. Residues 33-52 (SGKSQLLFAIVFTARYLDLF) traverse the membrane as a helical segment. Positions 47–48 (RY) are interaction with the K-D-E-L motif on target proteins. At 53-58 (TNYISF) the chain is on the lumenal side. A helical transmembrane segment spans residues 59–79 (YNTSMKVVYVASSYATVWMIY). Topologically, residues 80-92 (SKFKATYDGNHDT) are cytoplasmic. The helical transmembrane segment at 93-110 (FRVEFLIVPTAILAFLVN) threads the bilayer. Residues 111–116 (HDFTPL) lie on the Lumenal side of the membrane. Residues 117-135 (EIFWTFSIYLESVAILPQL) traverse the membrane as a helical segment. The Cytoplasmic portion of the chain corresponds to 136-149 (FMVSKTGEAETITS). A helical membrane pass occupies residues 150–168 (HYLFALGIYRTLYLFNWIW). The segment at 159 to 169 (RTLYLFNWIWR) is interaction with the K-D-E-L motif on target proteins. The Lumenal portion of the chain corresponds to 169–178 (RYQFEGFFDL). Residues 179–199 (IAIVAGLVQTVLYCDFFYLYV) traverse the membrane as a helical segment. Over 200-212 (TKVLKGKKLSLPA) the chain is Cytoplasmic. The tract at residues 204–207 (KGKK) is important for recycling of cargo proteins with the sequence motif K-D-E-L from the Golgi to the endoplasmic reticulum.

The protein belongs to the ERD2 family.

The protein resides in the golgi apparatus membrane. Its subcellular location is the cytoplasmic vesicle. It is found in the COPI-coated vesicle membrane. It localises to the endoplasmic reticulum membrane. The protein localises to the endoplasmic reticulum-Golgi intermediate compartment membrane. Receptor for the C-terminal sequence motif K-D-E-L that is present on endoplasmic reticulum resident proteins and that mediates their recycling from the Golgi back to the endoplasmic reticulum. The protein is ER lumen protein-retaining receptor 1-A (kdelr1-a) of Xenopus laevis (African clawed frog).